The sequence spans 262 residues: Tryptophan synthase alpha chain (262 aa).

Active-site proton acceptor residues include Glu-52 and Asp-63.

The protein belongs to the TrpA family. As to quaternary structure, tetramer of two alpha and two beta chains.

The enzyme catalyses (1S,2R)-1-C-(indol-3-yl)glycerol 3-phosphate + L-serine = D-glyceraldehyde 3-phosphate + L-tryptophan + H2O. It functions in the pathway amino-acid biosynthesis; L-tryptophan biosynthesis; L-tryptophan from chorismate: step 5/5. The alpha subunit is responsible for the aldol cleavage of indoleglycerol phosphate to indole and glyceraldehyde 3-phosphate. The protein is Tryptophan synthase alpha chain of Mycobacteroides abscessus (strain ATCC 19977 / DSM 44196 / CCUG 20993 / CIP 104536 / JCM 13569 / NCTC 13031 / TMC 1543 / L948) (Mycobacterium abscessus).